Reading from the N-terminus, the 183-residue chain is Ferritin light chain 1 (183 aa).

The Ferritin-like diiron domain maps to 7 to 156 (QNYSTEVEAA…NHLTNLRRVA (150 aa)). Residues Glu-54, Glu-57, Glu-58, Glu-61, and Glu-64 each coordinate Fe cation.

This sequence belongs to the ferritin family. Oligomer of 24 subunits. There are two types of subunits: L (light) chain and H (heavy) chain. The major chain can be light or heavy, depending on the species and tissue type. The functional molecule forms a roughly spherical shell with a diameter of 12 nm and contains a central cavity into which the insoluble mineral iron core is deposited. Interacts with NCOA4. In terms of tissue distribution, in rat liver, the light chain is the major chain.

Its subcellular location is the cytoplasmic vesicle. It localises to the autophagosome. The protein resides in the cytoplasm. It is found in the autolysosome. Its function is as follows. Stores iron in a soluble, non-toxic, readily available form. Important for iron homeostasis. Iron is taken up in the ferrous form and deposited as ferric hydroxides after oxidation. Also plays a role in delivery of iron to cells. Mediates iron uptake in capsule cells of the developing kidney. Delivery to lysosomes by the cargo receptor NCOA4 for autophagic degradation and release or iron. This Rattus norvegicus (Rat) protein is Ferritin light chain 1 (Ftl1).